The chain runs to 116 residues: Vesicle-associated membrane protein 5 (116 aa).

Over 1–72 (MAGKELERCQ…RWENARCRIY (72 aa)) the chain is Cytoplasmic. A v-SNARE coiled-coil homology domain is found at 5-65 (ELERCQRQAD…KTLAQKKRWE (61 aa)). Ser41, Ser48, and Ser49 each carry phosphoserine. A helical; Anchor for type IV membrane protein transmembrane segment spans residues 73–93 (MGLAVGIALLILLIVLLVIFL). Residues 94–116 (PQSSKGSSAPQVQDAGPASGPGE) are Vesicular-facing. A disordered region spans residues 97 to 116 (SKGSSAPQVQDAGPASGPGE).

It belongs to the synaptobrevin family.

It is found in the cell membrane. The protein resides in the endomembrane system. It localises to the golgi apparatus. The protein localises to the trans-Golgi network membrane. Functionally, may participate in trafficking events that are associated with myogenesis, such as myoblast fusion and/or GLUT4 trafficking. The polypeptide is Vesicle-associated membrane protein 5 (VAMP5) (Bos taurus (Bovine)).